Reading from the N-terminus, the 180-residue chain is Probable macrolide acetyltransferase (180 aa).

The protein belongs to the transferase hexapeptide repeat family.

This chain is Probable macrolide acetyltransferase, found in Lysinibacillus sphaericus (Bacillus sphaericus).